The following is a 512-amino-acid chain: MQNLLSIITFLPLAAAAVLAVVSRGSGPAADRNAKWVALTATVVTFLVSLLLLAGFDPANPGMQFVEDRAWIMGLHYKLGVDGISILFVMLTTFLMPLTIASAWHVETRVKEYMIAFLVLEALMIGVFVALDLVLFYLFFEAGLIPMFLIIGIWGGKERIYAAFKFFLYTFLGSVLMLVAMVAMYMMAGTTDIVTLMSFDFPHADLPFLGWWTLTGGVQTLLFLAFFASFAVKMPMWPVHTWLPDAHVQAPTAGSVVLAAVLLKMGGYGFLRFSLPMFPVGAETMTTFVFILSAVAIVYTSLVALAQEDMKKLIAYSSVAHMGYVTMGIFAANQQGVDGAIFQMLSHGFISGALFLCVGVIYDRMHTREIAAYGGLVNRMPAYALIFMFFTMANVGLPGTSGFVGEFLTLLGIFQVNTWVALFATSGVILSAAYALWLYRRVVFGELVKESLKTISDMTTREKAIFAPLVAMTLLLGVYPSLVTDLIGPSVAHLVQNYHADLGTLAQATAGN.

Transmembrane regions (helical) follow at residues 3-23, 36-56, 84-104, 112-132, 133-153, 166-186, 208-228, 251-271, 285-305, 313-333, 341-361, 384-404, 419-439, and 464-484; these read NLLSIITFLPLAAAAVLAVVS, WVALTATVVTFLVSLLLLAGF, ISILFVMLTTFLMPLTIASAW, EYMIAFLVLEALMIGVFVALD, LVLFYLFFEAGLIPMFLIIGI, FFLYTFLGSVLMLVAMVAMYM, FLGWWTLTGGVQTLLFLAFFA, PTAGSVVLAAVLLKMGGYGFL, MTTFVFILSAVAIVYTSLVAL, LIAYSSVAHMGYVTMGIFAAN, IFQMLSHGFISGALFLCVGVI, ALIFMFFTMANVGLPGTSGFV, WVALFATSGVILSAAYALWLY, and AIFAPLVAMTLLLGVYPSLVT.

Belongs to the complex I subunit 4 family.

It is found in the cell membrane. The enzyme catalyses a quinone + NADH + 5 H(+)(in) = a quinol + NAD(+) + 4 H(+)(out). Functionally, NDH-1 shuttles electrons from NADH, via FMN and iron-sulfur (Fe-S) centers, to quinones in the respiratory chain. The immediate electron acceptor for the enzyme in this species is believed to be ubiquinone. Couples the redox reaction to proton translocation (for every two electrons transferred, four hydrogen ions are translocated across the cytoplasmic membrane), and thus conserves the redox energy in a proton gradient. The protein is NADH-quinone oxidoreductase subunit M (nuoM) of Rhodobacter capsulatus (Rhodopseudomonas capsulata).